The chain runs to 116 residues: Methionine-R-sulfoxide reductase B1 (116 aa).

In terms of domain architecture, MsrB spans 1–106 (MSFCSFFGGE…FSSSLKFIPK (106 aa)). Residues C23, C26, C71, and C74 each contribute to the Zn(2+) site. The active-site Nucleophile is U95. Residue U95 is a non-standard amino acid, selenocysteine.

The protein belongs to the MsrB Met sulfoxide reductase family. The cofactor is Zn(2+). Post-translationally, truncated MSRB1/SEPX1 proteins produced by failed UGA/Sec decoding are ubiquitinated by the CRL2(FEM1C) E3 ubiquitin-protein ligase complex.

The protein localises to the cytoplasm. It localises to the nucleus. The protein resides in the cytoskeleton. It carries out the reaction L-methionyl-[protein] + [thioredoxin]-disulfide + H2O = L-methionyl-(R)-S-oxide-[protein] + [thioredoxin]-dithiol. It catalyses the reaction [thioredoxin]-disulfide + L-methionine + H2O = L-methionine (R)-S-oxide + [thioredoxin]-dithiol. Methionine-sulfoxide reductase that specifically reduces methionine (R)-sulfoxide back to methionine. While in many cases, methionine oxidation is the result of random oxidation following oxidative stress, methionine oxidation is also a post-translational modification that takes place on specific residue. Acts as a regulator of actin assembly by reducing methionine (R)-sulfoxide mediated by MICALs (MICAL1, MICAL2 or MICAL3) on actin, thereby promoting filament repolymerization. Plays a role in innate immunity by reducing oxidized actin, leading to actin repolymerization in macrophages. The chain is Methionine-R-sulfoxide reductase B1 (MSRB1) from Bos taurus (Bovine).